A 733-amino-acid polypeptide reads, in one-letter code: MDEDDGLLLNFAVPDVSVSSGSNKRTTSKVTGGKWKDRRKLQLSLQGRGRNQKKDRSATGKDDGKKHENDESNDSKKRPTIEPIHGPTSKMIKFSESKGEFGGKNNSYVSSLFTSNQSSSQLKVTKESDEKTYLPSNAPVEDASTFEGLGINERLSKHLTETLRFKNPTKVQKSVIPTMLSTERDLFIKAQTGSGKTLSFLLPIFHKLMMENKHKINRDSGLFAVILTPTRELATQIYGVLETLTRCYHHIVPGIVIGGEKKKSEKARIRKGVNILVGTPGRLADHMENTESLDISQLRWLILDEGDKLVELGFEETITKITNLITRNSQIMESMHKWQGLPVRRINLLCSATMQNNVEKLGSIILNNPEMISDGSSSGKHSEEVTAPDQLIQNVVVVPPKLRLVTLSAILKKISSDMSGTNNSTRTIVFFSCSDSVNFHFDVFTRGGNTFKKVKNDESGKLETVEVENDTPLIGQGTAVYKLHGSLSQQTRTSTLQAFIKDSKSNHSILFCTDVASRGLDLPNIASVIEYDPPFTIDDHLHRIGRSARVGKEGTATLFLLPGNEEGYVDGKLQVVHPKEGNLRIVNYENYLKDGFSAKSNNEDTKKKSKDPKSREGKWDIHATTWHLDIERWLLEDSGAHDKAVQAFTSHIRAYATHLSSERNYFNVKLLHLGHLAKSFGLRETPKKLGKSVESNSGIQGASKKTKKEDPRKKMLRMAKMALKSNSDEFNYS.

Disordered stretches follow at residues 1–92 (MDED…SKMI) and 119–139 (SSQLKVTKESDEKTYLPSNAP). Positions 17–30 (SVSSGSNKRTTSKV) are enriched in polar residues. Residues 52-80 (QKKDRSATGKDDGKKHENDESNDSKKRPT) show a composition bias toward basic and acidic residues. Residues 144–173 (STFEGLGINERLSKHLTETLRFKNPTKVQK) carry the Q motif motif. Residues 177–372 (PTMLSTERDL…SIILNNPEMI (196 aa)) form the Helicase ATP-binding domain. 190–197 (AQTGSGKT) contacts ATP. A DEAD box motif is present at residues 304–307 (DEGD). Positions 406 to 596 (TLSAILKKIS…NYENYLKDGF (191 aa)) constitute a Helicase C-terminal domain. Positions 687-714 (KKLGKSVESNSGIQGASKKTKKEDPRKK) are disordered.

It belongs to the DEAD box helicase family. DDX31/DBP7 subfamily.

Its subcellular location is the nucleus. It is found in the nucleolus. The enzyme catalyses ATP + H2O = ADP + phosphate + H(+). Its function is as follows. ATP-binding RNA helicase involved in the biogenesis of 60S ribosomal subunits and is required for the normal formation of 25S and 5.8S rRNAs. This Scheffersomyces stipitis (strain ATCC 58785 / CBS 6054 / NBRC 10063 / NRRL Y-11545) (Yeast) protein is ATP-dependent RNA helicase DBP7 (DPB7).